Here is a 148-residue protein sequence, read N- to C-terminus: Large ribosomal subunit protein bL9 (148 aa).

The protein belongs to the bacterial ribosomal protein bL9 family.

In terms of biological role, binds to the 23S rRNA. The protein is Large ribosomal subunit protein bL9 of Pseudomonas fluorescens (strain SBW25).